Consider the following 146-residue polypeptide: Outer envelope pore protein 16, chloroplastic (146 aa).

The tract at residues 1-73 (MPRSSFSGSL…EKSLKKMCKE (73 aa)) is contains 4 beta strands. 3 consecutive transmembrane segments (helical) span residues 75 to 91 (AYWG…EYGV), 103 to 119 (AMFG…AASN), and 128 to 146 (DAIT…NYLT).

It belongs to the Tim17/Tim22/Tim23 family. Plastid outer envelope porin OEP16 (TC 1.B.30) subfamily. In terms of assembly, homodimer and oligomers in membrane.

It localises to the plastid. It is found in the chloroplast outer membrane. The protein resides in the etioplast membrane. In terms of biological role, voltage-dependent high-conductance channel with a slight cation-selectivity; selective for amino acids but excludes triosephosphates or uncharged sugars. Non-essential amino acid-selective channel protein and translocation pore for NADPH:protochlorophyllide oxidoreductase A (PORA) and possibly PORB. This Pisum sativum (Garden pea) protein is Outer envelope pore protein 16, chloroplastic (OEP16).